The chain runs to 405 residues: Potassium channel subfamily K member 13 (405 aa).

At 1-19 (MAGRGCGCSPGHLNEDNAR) the chain is on the cytoplasmic side. A helical transmembrane segment spans residues 20 to 40 (FLLLAGLILLYLLGGAAVFSA). N-linked (GlcNAc...) asparagine glycans are attached at residues asparagine 59 and asparagine 65. Positions 95-115 (WDFTGAFYFVGTVVSTIGFGM) form an intramembrane region, pore-forming. Threonine 110, isoleucine 111, and glycine 112 together coordinate K(+). Residues 110–115 (TIGFGM) are selectivity filter 1. The chain crosses the membrane as a helical span at residues 125–145 (IFLIFYGLIGCASTILFFNLF). At 146 to 193 (LERLITVIACVMRSCHQQQLRRRGAVTQDNMKAPEKGEADSLTGWKPS) the chain is on the cytoplasmic side. The chain crosses the membrane as a helical span at residues 194–214 (VYYVMLILCLASVAISCGASA). The segment at residues 224 to 244 (YFDSVYFCFVAFSTIGFGDLV) is an intramembrane region (pore-forming). Residues threonine 237, isoleucine 238, glycine 239, and phenylalanine 240 each contribute to the K(+) site. Positions 237–242 (TIGFGD) are selectivity filter 2. The chain crosses the membrane as a helical span at residues 263–283 (FLILMGVCCIYSLFNVISILI). Topologically, residues 284-405 (KQTVNWILRK…NRLAETSGDR (122 aa)) are cytoplasmic.

The protein belongs to the two pore domain potassium channel (TC 1.A.1.8) family. Homodimer. Heterodimer with KCNK12.

The protein resides in the cell membrane. The enzyme catalyses K(+)(in) = K(+)(out). Its function is as follows. K(+) channel that conducts outward rectifying tonic currents potentiated by purinergic signals. Homo- and heterodimerizes to form functional channels with distinct regulatory and gating properties. Contributes most of K(+) currents at the plasma membrane of resting microglia. Maintains a depolarized membrane potential required for proper ramified microglia morphology and phagocytosis, selectively mediating microglial pruning of presynaptic compartments at hippocampal excitatory synapses. Upon local release of ATP caused by neuronal injury or infection, it is potentiated by P2RY12 and P2RX7 receptor signaling and contributes to ATP-triggered K(+) efflux underlying microglial NLRP3 inflammasome assembly and IL1B release. This is Potassium channel subfamily K member 13 from Mus musculus (Mouse).